The chain runs to 225 residues: Ribonuclease 3 (225 aa).

Residues 5 to 127 form the RNase III domain; the sequence is LDRLQRSLGH…VFAATFLDQG (123 aa). A Mg(2+)-binding site is contributed by Glu-40. The active site involves Asp-44. Mg(2+) is bound by residues Asp-113 and Glu-116. Glu-116 is a catalytic residue. The DRBM domain occupies 154 to 224; sequence DPKTALQELL…AELALAQLRK (71 aa).

Belongs to the ribonuclease III family. Homodimer. Mg(2+) is required as a cofactor.

It is found in the cytoplasm. It catalyses the reaction Endonucleolytic cleavage to 5'-phosphomonoester.. Its function is as follows. Digests double-stranded RNA. Involved in the processing of primary rRNA transcript to yield the immediate precursors to the large and small rRNAs (23S and 16S). Processes some mRNAs, and tRNAs when they are encoded in the rRNA operon. Processes pre-crRNA and tracrRNA of type II CRISPR loci if present in the organism. The polypeptide is Ribonuclease 3 (Aromatoleum aromaticum (strain DSM 19018 / LMG 30748 / EbN1) (Azoarcus sp. (strain EbN1))).